The primary structure comprises 464 residues: 3-isopropylmalate dehydratase large subunit (464 aa).

Positions 337, 397, and 400 each coordinate [4Fe-4S] cluster.

Belongs to the aconitase/IPM isomerase family. LeuC type 1 subfamily. Heterodimer of LeuC and LeuD. Requires [4Fe-4S] cluster as cofactor.

The catalysed reaction is (2R,3S)-3-isopropylmalate = (2S)-2-isopropylmalate. It participates in amino-acid biosynthesis; L-leucine biosynthesis; L-leucine from 3-methyl-2-oxobutanoate: step 2/4. Catalyzes the isomerization between 2-isopropylmalate and 3-isopropylmalate, via the formation of 2-isopropylmaleate. The polypeptide is 3-isopropylmalate dehydratase large subunit (Bacillus cytotoxicus (strain DSM 22905 / CIP 110041 / 391-98 / NVH 391-98)).